We begin with the raw amino-acid sequence, 411 residues long: Endo-1,4-beta-xylanase A (411 aa).

The signal sequence occupies residues 1-33; sequence MKKFKIRKLMARVLALALVFSTFFMVSKVDANA. One can recognise a GH10 domain in the interval 34 to 382; it reads ASYNLMETYG…KPAYDEVVKA (349 aa). E201 acts as the Proton donor in catalysis. Catalysis depends on E311, which acts as the Nucleophile. The disordered stretch occupies residues 387 to 411; the sequence is FGNPGSFTPQPTITPQPTPTPSGQT. Residues 398–411 are compositionally biased toward pro residues; it reads TITPQPTPTPSGQT.

This sequence belongs to the glycosyl hydrolase 10 (cellulase F) family.

It carries out the reaction Endohydrolysis of (1-&gt;4)-beta-D-xylosidic linkages in xylans.. Its pathway is glycan degradation; xylan degradation. In terms of biological role, b.fibrisolvens is located in the rumen of ruminant animals, where it contributes to the animal's digestion of plant material by hydrolyzing hemicellulose with its xylanases. In Butyrivibrio fibrisolvens, this protein is Endo-1,4-beta-xylanase A (xynA).